Here is a 483-residue protein sequence, read N- to C-terminus: Glutamyl-tRNA(Gln) amidotransferase subunit A (483 aa).

Catalysis depends on charge relay system residues Lys-76 and Ser-151. Ser-175 acts as the Acyl-ester intermediate in catalysis.

Belongs to the amidase family. GatA subfamily. In terms of assembly, heterotrimer of A, B and C subunits.

The catalysed reaction is L-glutamyl-tRNA(Gln) + L-glutamine + ATP + H2O = L-glutaminyl-tRNA(Gln) + L-glutamate + ADP + phosphate + H(+). In terms of biological role, allows the formation of correctly charged Gln-tRNA(Gln) through the transamidation of misacylated Glu-tRNA(Gln) in organisms which lack glutaminyl-tRNA synthetase. The reaction takes place in the presence of glutamine and ATP through an activated gamma-phospho-Glu-tRNA(Gln). In Pseudomonas putida (strain W619), this protein is Glutamyl-tRNA(Gln) amidotransferase subunit A.